A 540-amino-acid polypeptide reads, in one-letter code: Putative rhamnogalacturonase (540 aa).

The first 23 residues, 1 to 23, serve as a signal peptide directing secretion; that stretch reads MGFLTLFHMAFLAVSLFVSGALA. 2 disulfide bridges follow: C53–C100 and C192–C203. N89 is a glycosylation site (N-linked (GlcNAc...) asparagine). N-linked (GlcNAc...) asparagine glycosylation is present at N368.

It belongs to the polysaccharide lyase 4 family.

It is found in the secreted. The catalysed reaction is Endotype eliminative cleavage of L-alpha-rhamnopyranosyl-(1-&gt;4)-alpha-D-galactopyranosyluronic acid bonds of rhamnogalacturonan I domains in ramified hairy regions of pectin leaving L-rhamnopyranose at the reducing end and 4-deoxy-4,5-unsaturated D-galactopyranosyluronic acid at the non-reducing end.. Functionally, could be a pectinolytic enzyme that hydrolyzes the alpha-L-rhamnopyranosyl-(1,4)-alpha-D-galacturonopyranosyl glycosidic linkage by beta-elimination, thereby generating oligosaccharides terminating at the non-reducing end with a hex-4-enopyranosyluronic acid residue. This chain is Putative rhamnogalacturonase (asd-1), found in Neurospora crassa (strain ATCC 24698 / 74-OR23-1A / CBS 708.71 / DSM 1257 / FGSC 987).